A 339-amino-acid polypeptide reads, in one-letter code: DNA-directed RNA polymerase subunit alpha (339 aa).

Residues 1-233 (MVREEVAGST…DLFLPFLHAE (233 aa)) are alpha N-terminal domain (alpha-NTD). The interval 266–339 (GIPLNCIFID…IDLLKNKLSF (74 aa)) is alpha C-terminal domain (alpha-CTD).

Belongs to the RNA polymerase alpha chain family. As to quaternary structure, in plastids the minimal PEP RNA polymerase catalytic core is composed of four subunits: alpha, beta, beta', and beta''. When a (nuclear-encoded) sigma factor is associated with the core the holoenzyme is formed, which can initiate transcription.

It is found in the plastid. The protein resides in the chloroplast. The enzyme catalyses RNA(n) + a ribonucleoside 5'-triphosphate = RNA(n+1) + diphosphate. Functionally, DNA-dependent RNA polymerase catalyzes the transcription of DNA into RNA using the four ribonucleoside triphosphates as substrates. This chain is DNA-directed RNA polymerase subunit alpha, found in Hordeum bulbosum (Bulbous barley).